We begin with the raw amino-acid sequence, 562 residues long: Dihydroxy-acid dehydratase (562 aa).

Position 80 (aspartate 80) interacts with Mg(2+). Cysteine 121 is a binding site for [2Fe-2S] cluster. Mg(2+) is bound by residues aspartate 122 and lysine 123. Position 123 is an N6-carboxylysine (lysine 123). Residue cysteine 194 coordinates [2Fe-2S] cluster. Residue glutamate 446 participates in Mg(2+) binding. Serine 472 (proton acceptor) is an active-site residue.

This sequence belongs to the IlvD/Edd family. Homodimer. The cofactor is [2Fe-2S] cluster. Mg(2+) is required as a cofactor.

It carries out the reaction (2R)-2,3-dihydroxy-3-methylbutanoate = 3-methyl-2-oxobutanoate + H2O. The enzyme catalyses (2R,3R)-2,3-dihydroxy-3-methylpentanoate = (S)-3-methyl-2-oxopentanoate + H2O. The protein operates within amino-acid biosynthesis; L-isoleucine biosynthesis; L-isoleucine from 2-oxobutanoate: step 3/4. Its pathway is amino-acid biosynthesis; L-valine biosynthesis; L-valine from pyruvate: step 3/4. Its function is as follows. Functions in the biosynthesis of branched-chain amino acids. Catalyzes the dehydration of (2R,3R)-2,3-dihydroxy-3-methylpentanoate (2,3-dihydroxy-3-methylvalerate) into 2-oxo-3-methylpentanoate (2-oxo-3-methylvalerate) and of (2R)-2,3-dihydroxy-3-methylbutanoate (2,3-dihydroxyisovalerate) into 2-oxo-3-methylbutanoate (2-oxoisovalerate), the penultimate precursor to L-isoleucine and L-valine, respectively. This Staphylococcus haemolyticus (strain JCSC1435) protein is Dihydroxy-acid dehydratase.